A 526-amino-acid polypeptide reads, in one-letter code: Light-independent protochlorophyllide reductase subunit B (526 aa).

Residue D36 participates in [4Fe-4S] cluster binding. The active-site Proton donor is D290. A substrate-binding site is contributed by 425 to 426 (GL).

The protein belongs to the ChlB/BchB/BchZ family. In terms of assembly, protochlorophyllide reductase is composed of three subunits; ChlL, ChlN and ChlB. Forms a heterotetramer of two ChlB and two ChlN subunits. [4Fe-4S] cluster serves as cofactor.

The enzyme catalyses chlorophyllide a + oxidized 2[4Fe-4S]-[ferredoxin] + 2 ADP + 2 phosphate = protochlorophyllide a + reduced 2[4Fe-4S]-[ferredoxin] + 2 ATP + 2 H2O. It functions in the pathway porphyrin-containing compound metabolism; chlorophyll biosynthesis (light-independent). Its function is as follows. Component of the dark-operative protochlorophyllide reductase (DPOR) that uses Mg-ATP and reduced ferredoxin to reduce ring D of protochlorophyllide (Pchlide) to form chlorophyllide a (Chlide). This reaction is light-independent. The NB-protein (ChlN-ChlB) is the catalytic component of the complex. The polypeptide is Light-independent protochlorophyllide reductase subunit B (Prochlorococcus marinus subsp. pastoris (strain CCMP1986 / NIES-2087 / MED4)).